A 200-amino-acid chain; its full sequence is Regulator of G-protein signaling 16 (200 aa).

2 S-palmitoyl cysteine lipidation sites follow: C2 and C12. An RGS domain is found at 65–181 (SFDLLLSSKN…LKSPAYRDLA (117 aa)). Y168 and Y177 each carry phosphotyrosine.

In terms of assembly, interacts with GNAI1 and GNAQ. Interacts with GNAI3, GNAI3 and GNAO1. As to quaternary structure, (Microbial infection) Interacts with porcine circovirus 2 ORF3 protein. In terms of processing, palmitoylated on Cys-2 and/or Cys-12. Phosphorylated. Phosphorylation at Tyr-168 by EGFR enhances GTPase accelerating (GAP) activity toward GNAI1.

The protein resides in the membrane. Functionally, regulates G protein-coupled receptor signaling cascades. Inhibits signal transduction by increasing the GTPase activity of G protein alpha subunits, thereby driving them into their inactive GDP-bound form. Plays an important role in the phototransduction cascade by regulating the lifetime and effective concentration of activated transducin alpha. May regulate extra and intracellular mitogenic signals. In terms of biological role, (Microbial infection) Gets inactivated and/or degraded by porcine circovirus 2 ORF3 protein, leading to enhanced expression of IL-6 and IL-8 in infected lymphocytes. This would explain chronic inflammatory response of PCV2 infected pigs. In Sus scrofa (Pig), this protein is Regulator of G-protein signaling 16 (RGS16).